The chain runs to 180 residues: Adenine phosphoribosyltransferase (180 aa).

This sequence belongs to the purine/pyrimidine phosphoribosyltransferase family. As to quaternary structure, homodimer.

It localises to the cytoplasm. It carries out the reaction AMP + diphosphate = 5-phospho-alpha-D-ribose 1-diphosphate + adenine. The protein operates within purine metabolism; AMP biosynthesis via salvage pathway; AMP from adenine: step 1/1. In terms of biological role, catalyzes a salvage reaction resulting in the formation of AMP, that is energically less costly than de novo synthesis. The protein is Adenine phosphoribosyltransferase of Marinomonas sp. (strain MWYL1).